The primary structure comprises 291 residues: Ribosomal RNA small subunit methyltransferase H (291 aa).

Residues 31-33, Asp-49, Phe-76, Asp-97, and Gln-104 contribute to the S-adenosyl-L-methionine site; that span reads GGY.

The protein belongs to the methyltransferase superfamily. RsmH family.

It localises to the cytoplasm. The enzyme catalyses cytidine(1402) in 16S rRNA + S-adenosyl-L-methionine = N(4)-methylcytidine(1402) in 16S rRNA + S-adenosyl-L-homocysteine + H(+). Specifically methylates the N4 position of cytidine in position 1402 (C1402) of 16S rRNA. This chain is Ribosomal RNA small subunit methyltransferase H, found in Anaplasma marginale (strain Florida).